The chain runs to 405 residues: Imidazolonepropionase (405 aa).

Fe(3+)-binding residues include His70 and His72. Positions 70 and 72 each coordinate Zn(2+). 3 residues coordinate 4-imidazolone-5-propanoate: Arg79, Tyr142, and His175. Tyr142 provides a ligand contact to N-formimidoyl-L-glutamate. His240 is a binding site for Fe(3+). His240 provides a ligand contact to Zn(2+). Gln243 lines the 4-imidazolone-5-propanoate pocket. Asp315 lines the Fe(3+) pocket. Asp315 is a binding site for Zn(2+). Asn317 and Gly319 together coordinate N-formimidoyl-L-glutamate. Ser320 contributes to the 4-imidazolone-5-propanoate binding site.

It belongs to the metallo-dependent hydrolases superfamily. HutI family. Zn(2+) serves as cofactor. It depends on Fe(3+) as a cofactor.

Its subcellular location is the cytoplasm. It carries out the reaction 4-imidazolone-5-propanoate + H2O = N-formimidoyl-L-glutamate. It functions in the pathway amino-acid degradation; L-histidine degradation into L-glutamate; N-formimidoyl-L-glutamate from L-histidine: step 3/3. Catalyzes the hydrolytic cleavage of the carbon-nitrogen bond in imidazolone-5-propanoate to yield N-formimidoyl-L-glutamate. It is the third step in the universal histidine degradation pathway. This is Imidazolonepropionase from Ruegeria sp. (strain TM1040) (Silicibacter sp.).